A 364-amino-acid chain; its full sequence is Cyclin-D3-2 (364 aa).

The interval 331-364 (PPGRPIKRGAAAATTADPLPADEESRDAWPPYAA) is disordered. The span at 340–349 (AAAATTADPL) shows a compositional bias: low complexity.

This sequence belongs to the cyclin family. Cyclin D subfamily.

The sequence is that of Cyclin-D3-2 (CYCD3-2) from Oryza sativa subsp. japonica (Rice).